The chain runs to 378 residues: S-adenosylmethionine synthase (378 aa).

Histidine 15 provides a ligand contact to ATP. Aspartate 17 is a Mg(2+) binding site. Glutamate 43 provides a ligand contact to K(+). Glutamate 56 and glutamine 99 together coordinate L-methionine. Residues glutamine 99 to arginine 109 are flexible loop. ATP-binding positions include aspartate 164 to lysine 166, arginine 230 to phenylalanine 231, aspartate 239, arginine 245 to lysine 246, alanine 262, and lysine 266. Aspartate 239 is a binding site for L-methionine. Lysine 270 provides a ligand contact to L-methionine.

It belongs to the AdoMet synthase family. Homotetramer; dimer of dimers. Mg(2+) is required as a cofactor. K(+) serves as cofactor.

Its subcellular location is the cytoplasm. It carries out the reaction L-methionine + ATP + H2O = S-adenosyl-L-methionine + phosphate + diphosphate. The protein operates within amino-acid biosynthesis; S-adenosyl-L-methionine biosynthesis; S-adenosyl-L-methionine from L-methionine: step 1/1. Catalyzes the formation of S-adenosylmethionine (AdoMet) from methionine and ATP. The overall synthetic reaction is composed of two sequential steps, AdoMet formation and the subsequent tripolyphosphate hydrolysis which occurs prior to release of AdoMet from the enzyme. This is S-adenosylmethionine synthase from Buchnera aphidicola subsp. Acyrthosiphon pisum (strain 5A).